The sequence spans 176 residues: RNA 2',3'-cyclic phosphodiesterase (176 aa).

His-28 serves as the catalytic Proton donor. 2 consecutive short sequence motifs (HXTX) follow at residues 28–31 (HITL) and 113–116 (HVTL). Residue His-113 is the Proton acceptor of the active site.

This sequence belongs to the 2H phosphoesterase superfamily. ThpR family.

The enzyme catalyses a 3'-end 2',3'-cyclophospho-ribonucleotide-RNA + H2O = a 3'-end 2'-phospho-ribonucleotide-RNA + H(+). In terms of biological role, hydrolyzes RNA 2',3'-cyclic phosphodiester to an RNA 2'-phosphomonoester. This Aeropyrum pernix (strain ATCC 700893 / DSM 11879 / JCM 9820 / NBRC 100138 / K1) protein is RNA 2',3'-cyclic phosphodiesterase.